Consider the following 406-residue polypeptide: GTPase Obg (406 aa).

One can recognise an Obg domain in the interval 1–159 (MRFVDEAVIT…REIRLELKVL (159 aa)). The interval 120–143 (GGEGGLGNTHFKSSTNRAPRKCTT) is disordered. The region spanning 160–333 (ADVGLLGMPN…VVYYLMDQIE (174 aa)) is the OBG-type G domain. GTP is bound by residues 166 to 173 (GMPNAGKS), 191 to 195 (FTTMV), 213 to 216 (DIPG), 283 to 286 (NKLD), and 314 to 316 (SGL). Residues serine 173 and threonine 193 each contribute to the Mg(2+) site. The segment at 381-406 (ESMMDDDDDFDDDEDDGDVESIYVRD) is disordered. Positions 383 to 399 (MMDDDDDFDDDEDDGDV) are enriched in acidic residues.

Belongs to the TRAFAC class OBG-HflX-like GTPase superfamily. OBG GTPase family. As to quaternary structure, monomer. Requires Mg(2+) as cofactor.

Its subcellular location is the cytoplasm. An essential GTPase which binds GTP, GDP and possibly (p)ppGpp with moderate affinity, with high nucleotide exchange rates and a fairly low GTP hydrolysis rate. Plays a role in control of the cell cycle, stress response, ribosome biogenesis and in those bacteria that undergo differentiation, in morphogenesis control. The chain is GTPase Obg from Acinetobacter baumannii (strain ACICU).